Consider the following 158-residue polypeptide: Transcription elongation factor GreA (158 aa).

Belongs to the GreA/GreB family.

Necessary for efficient RNA polymerase transcription elongation past template-encoded arresting sites. The arresting sites in DNA have the property of trapping a certain fraction of elongating RNA polymerases that pass through, resulting in locked ternary complexes. Cleavage of the nascent transcript by cleavage factors such as GreA or GreB allows the resumption of elongation from the new 3'terminus. GreA releases sequences of 2 to 3 nucleotides. This Baumannia cicadellinicola subsp. Homalodisca coagulata protein is Transcription elongation factor GreA.